The chain runs to 339 residues: Ketol-acid reductoisomerase (NADP(+)) (339 aa).

The KARI N-terminal Rossmann domain occupies 1–182 (MRVYYDRDAD…GGGRSGVIET (182 aa)). Residues 24–27 (YGSQ), Arg-48, Ser-51, Thr-53, and 83–86 (DELQ) each bind NADP(+). His-108 is a catalytic residue. Gly-134 is a binding site for NADP(+). In terms of domain architecture, KARI C-terminal knotted spans 183-328 (TFKEECETDL…EKLRGMMPWI (146 aa)). The Mg(2+) site is built by Asp-191, Glu-195, Glu-227, and Glu-231. Ser-252 serves as a coordination point for substrate.

The protein belongs to the ketol-acid reductoisomerase family. Requires Mg(2+) as cofactor.

The enzyme catalyses (2R)-2,3-dihydroxy-3-methylbutanoate + NADP(+) = (2S)-2-acetolactate + NADPH + H(+). It catalyses the reaction (2R,3R)-2,3-dihydroxy-3-methylpentanoate + NADP(+) = (S)-2-ethyl-2-hydroxy-3-oxobutanoate + NADPH + H(+). Its pathway is amino-acid biosynthesis; L-isoleucine biosynthesis; L-isoleucine from 2-oxobutanoate: step 2/4. The protein operates within amino-acid biosynthesis; L-valine biosynthesis; L-valine from pyruvate: step 2/4. Functionally, involved in the biosynthesis of branched-chain amino acids (BCAA). Catalyzes an alkyl-migration followed by a ketol-acid reduction of (S)-2-acetolactate (S2AL) to yield (R)-2,3-dihydroxy-isovalerate. In the isomerase reaction, S2AL is rearranged via a Mg-dependent methyl migration to produce 3-hydroxy-3-methyl-2-ketobutyrate (HMKB). In the reductase reaction, this 2-ketoacid undergoes a metal-dependent reduction by NADPH to yield (R)-2,3-dihydroxy-isovalerate. The polypeptide is Ketol-acid reductoisomerase (NADP(+)) (Brucella anthropi (strain ATCC 49188 / DSM 6882 / CCUG 24695 / JCM 21032 / LMG 3331 / NBRC 15819 / NCTC 12168 / Alc 37) (Ochrobactrum anthropi)).